The chain runs to 293 residues: TBC1 domain family member 7 (293 aa).

In terms of domain architecture, Rab-GAP TBC spans 50 to 231 (PLPSMYRALV…RVWDKVVSGS (182 aa)).

As to quaternary structure, component of the TSC-TBC complex (also named Rhebulator complex), composed of 2 molecules of TSC1, 2 molecules of TSC2 and 1 molecule of TBC1D7. Interacts with TSC1 (via C-terminal half of the coiled-coil domain). As to expression, highly expressed in heart, and slightly in kidney, liver and placenta.

The protein localises to the lysosome membrane. The protein resides in the cytoplasmic vesicle. It is found in the cytoplasm. It localises to the cytosol. Its function is as follows. Non-catalytic component of the TSC-TBC complex, a multiprotein complex that acts as a negative regulator of the canonical mTORC1 complex, an evolutionarily conserved central nutrient sensor that stimulates anabolic reactions and macromolecule biosynthesis to promote cellular biomass generation and growth. The TSC-TBC complex acts as a GTPase-activating protein (GAP) for the small GTPase RHEB, a direct activator of the protein kinase activity of mTORC1. In absence of nutrients, the TSC-TBC complex inhibits mTORC1, thereby preventing phosphorylation of ribosomal protein S6 kinase (RPS6KB1 and RPS6KB2) and EIF4EBP1 (4E-BP1) by the mTORC1 signaling. The TSC-TBC complex is inactivated in response to nutrients, relieving inhibition of mTORC1. The protein is TBC1 domain family member 7 of Homo sapiens (Human).